The following is a 311-amino-acid chain: Methionyl-tRNA formyltransferase (311 aa).

117 to 120 (SLLP) is a (6S)-5,6,7,8-tetrahydrofolate binding site.

It belongs to the Fmt family.

It carries out the reaction L-methionyl-tRNA(fMet) + (6R)-10-formyltetrahydrofolate = N-formyl-L-methionyl-tRNA(fMet) + (6S)-5,6,7,8-tetrahydrofolate + H(+). In terms of biological role, attaches a formyl group to the free amino group of methionyl-tRNA(fMet). The formyl group appears to play a dual role in the initiator identity of N-formylmethionyl-tRNA by promoting its recognition by IF2 and preventing the misappropriation of this tRNA by the elongation apparatus. The chain is Methionyl-tRNA formyltransferase from Bordetella avium (strain 197N).